The primary structure comprises 71 residues: Paralithocin 2 (71 aa).

Positions 1-23 (MGAAKVLLVVLAVMVAVPNLAEG) are cleaved as a signal peptide. 4 cysteine pairs are disulfide-bonded: Cys-29–Cys-58, Cys-34–Cys-54, Cys-39–Cys-52, and Cys-44–Cys-55. Arginine amide; partial is present on Arg-70.

It belongs to the paralithocin family. The amidated form is probably the active form.

Has antibacterial activity, mainly against marine Gram-positive bacteria like C.maltaromaticum (MIC=50 uM), C.mobile (MIC=50 uM), C.divergens (MIC=50 uM) and C.funditum (MIC=25 uM) but also against C.glutamicum (MIC=12.5 uM). Has very little or no activity against Gram-negative bacteria. The polypeptide is Paralithocin 2 (Paralithodes camtschaticus (Red king crab)).